A 342-amino-acid chain; its full sequence is Galactose mutarotase (342 aa).

Phosphoserine is present on S14. Beta-D-galactose-binding positions include 81-82, H107, 176-178, D243, Q279, and E307; these read NR and HSY. Residue H176 is the Proton donor of the active site. E307 serves as the catalytic Proton acceptor.

The protein belongs to the aldose epimerase family. In terms of assembly, monomer.

It is found in the cytoplasm. The catalysed reaction is alpha-D-galactose = beta-D-galactose. It catalyses the reaction alpha-D-glucose = beta-D-glucose. Its pathway is carbohydrate metabolism; hexose metabolism. The protein operates within carbohydrate metabolism; galactose metabolism. In terms of biological role, mutarotase that catalyzes the interconversion of beta-D-galactose and alpha-D-galactose during galactose metabolism. Beta-D-galactose is metabolized in the liver into glucose 1-phosphate, the primary metabolic fuel, by the action of four enzymes that constitute the Leloir pathway: GALM, GALK1 (galactokinase), GALT (galactose-1-phosphate uridylyltransferase) and GALE (UDP-galactose-4'-epimerase). Involved in the maintenance of the equilibrium between the beta- and alpha-anomers of galactose, therefore ensuring a sufficient supply of the alpha-anomer for GALK1. Also active on D-glucose although shows a preference for galactose over glucose. The chain is Galactose mutarotase from Mus musculus (Mouse).